Here is a 241-residue protein sequence, read N- to C-terminus: ATP synthase subunit a (241 aa).

Transmembrane regions (helical) follow at residues 30–50, 91–111, 128–148, 193–213, and 214–234; these read GQVF…VVVG, FIGT…LVPW, INTT…AGLS, LVVA…VMFL, and GLFT…YYIG.

The protein belongs to the ATPase A chain family. In terms of assembly, F-type ATPases have 2 components, CF(1) - the catalytic core - and CF(0) - the membrane proton channel. CF(1) has five subunits: alpha(3), beta(3), gamma(1), delta(1), epsilon(1). CF(0) has four main subunits: a, b, b' and c.

The protein localises to the cellular thylakoid membrane. Its function is as follows. Key component of the proton channel; it plays a direct role in the translocation of protons across the membrane. The polypeptide is ATP synthase subunit a (Prochlorococcus marinus (strain MIT 9211)).